Consider the following 151-residue polypeptide: Mating pheromone 3 (151 aa).

Residues 1 to 16 (MKAIFIILAILMVTQA) form the signal peptide. Positions 17-52 (FKMTSKVNTKLQSQIQSKFQSKNKLASTFQTSSQLK) are excised as a propeptide.

It is found in the secreted. Its function is as follows. Mating ciliate pheromones (or gamones) are diffusible extracellular communication signals that distinguish different intraspecific classes of cells commonly referred to as 'mating types'. They prepare the latter for conjugation by changing their cell surface properties. This chain is Mating pheromone 3 (PHR3), found in Euplotoides octocarinatus (Freshwater ciliate).